A 133-amino-acid chain; its full sequence is Ribosomal RNA large subunit methyltransferase H 1 (133 aa).

Residues I55, G89, and 101 to 106 (ISPMEM) each bind S-adenosyl-L-methionine.

The protein belongs to the RNA methyltransferase RlmH family. In terms of assembly, homodimer.

It is found in the cytoplasm. It carries out the reaction pseudouridine(1915) in 23S rRNA + S-adenosyl-L-methionine = N(3)-methylpseudouridine(1915) in 23S rRNA + S-adenosyl-L-homocysteine + H(+). In terms of biological role, specifically methylates the pseudouridine at position 1915 (m3Psi1915) in 23S rRNA. The polypeptide is Ribosomal RNA large subunit methyltransferase H 1 (Thermoanaerobacter sp. (strain X514)).